We begin with the raw amino-acid sequence, 188 residues long: Probable nicotinate-nucleotide adenylyltransferase (188 aa).

The protein belongs to the NadD family.

It catalyses the reaction nicotinate beta-D-ribonucleotide + ATP + H(+) = deamido-NAD(+) + diphosphate. Its pathway is cofactor biosynthesis; NAD(+) biosynthesis; deamido-NAD(+) from nicotinate D-ribonucleotide: step 1/1. Functionally, catalyzes the reversible adenylation of nicotinate mononucleotide (NaMN) to nicotinic acid adenine dinucleotide (NaAD). The polypeptide is Probable nicotinate-nucleotide adenylyltransferase (Salinispora tropica (strain ATCC BAA-916 / DSM 44818 / JCM 13857 / NBRC 105044 / CNB-440)).